Here is a 748-residue protein sequence, read N- to C-terminus: Methylmalonyl-CoA mutase, mitochondrial (748 aa).

A mitochondrion-targeting transit peptide spans methionine 1 to leucine 30. A malonyl-CoA-binding site is contributed by glutamine 48. The residue at position 87 (lysine 87) is an N6-acetyllysine. Malonyl-CoA is bound by residues tyrosine 94–methionine 97 and threonine 104–tyrosine 108. Lysine 210 is modified (N6-acetyllysine). Malonyl-CoA-binding positions include threonine 214 to glutamine 216, arginine 226, lysine 253, histidine 263, and arginine 302 to serine 304. Lysine 333 is modified (N6-acetyllysine). Lysine 341 carries the N6-succinyllysine modification. Residue serine 479 is modified to Phosphoserine. Residue lysine 593 is modified to N6-succinyllysine. Residue lysine 600 is modified to N6-acetyllysine. The B12-binding domain maps to arginine 612 to lysine 744. Histidine 625 provides a ligand contact to adenosylcob(III)alamin.

The protein belongs to the methylmalonyl-CoA mutase family. In terms of assembly, homodimer. Interacts (the apoenzyme form) with MMAA; the interaction is GTP dependent. The cofactor is adenosylcob(III)alamin.

Its subcellular location is the mitochondrion matrix. It is found in the mitochondrion. The protein resides in the cytoplasm. It carries out the reaction (R)-methylmalonyl-CoA = succinyl-CoA. Inhibited by itaconyl-CoA, a metabolite that inactivates the coenzyme B12 cofactor. Functionally, catalyzes the reversible isomerization of methylmalonyl-CoA (MMCoA) (generated from branched-chain amino acid metabolism and degradation of dietary odd chain fatty acids and cholesterol) to succinyl-CoA (3-carboxypropionyl-CoA), a key intermediate of the tricarboxylic acid cycle. This Mus musculus (Mouse) protein is Methylmalonyl-CoA mutase, mitochondrial (Mmut).